The sequence spans 860 residues: Leucine--tRNA ligase (860 aa).

The short motif at 42–52 (PYPSGRLHMGH) is the 'HIGH' region element. Positions 619–623 (KMSKS) match the 'KMSKS' region motif. An ATP-binding site is contributed by lysine 622.

This sequence belongs to the class-I aminoacyl-tRNA synthetase family.

The protein resides in the cytoplasm. The catalysed reaction is tRNA(Leu) + L-leucine + ATP = L-leucyl-tRNA(Leu) + AMP + diphosphate. This Serratia proteamaculans (strain 568) protein is Leucine--tRNA ligase.